Reading from the N-terminus, the 1154-residue chain is MRVSKVKVKDGGKDKMVLVHRKTTGAQLVYSGQPVSNETSNILPEKKRQSFDLSTLNKTIIKFDTAKKQKLNVDQYKIVEKIFKYPKQELPKQIKAEEILPFLNHKFQEPVKYWKNGKEESFNLTLLIVEAVQAQDKRKLQPYYDWKTWYIQTKSDLLKKSIENNRIDLTENLSKRKKALLAWETEFTASGSIDLTHYHKVYMTDVLCKMLQDVKPLTDDKGKINTNAYHRGLKKALQNHQPAIFGTREVPNEANRADNQLSIYHLEVVKYLEHYFPIKTSKRRNTADDIAHYLKAQTLKTTIEKQLVNAIRANIIQQGKTNHHELKADTTSNDLIRIKTNEAFVLNLTGTCAFAANNIRNMVDNEQTNDILGKGDFIKSLLKDNTNSQLYSFFFGEGLSTNKAEKETQLWGIRGAVQQIRNNVNHYKKDALKTVFNISNFENPTITDPKQQTNYADTIYKARFINELEKIPEAFAQQLKTGGAVSYYTIENLKSLLTTFQFSLCRSTIPFAPGFKKVFNGGINYQNAKQDESFYELMLEQYLRKENFAEESYNARYFMLKLIYNNLFLPGFTTDRKAFADSVGFVQMQNKKQAEKVNPRKKEAYAFEAVRPMTAADSIADYMAYVQSELMQEQNKKEEKVAEETRINFEKFVLQVFIKGFDSFLRAKEFDFVQMPQPQLTATASNQQKADKLNQLEASITADCKLTPQYAKADDATHIAFYVFCKLLDAAHLSNLRNELIKFRESVNEFKFHHLLEIIEICLLSADVVPTDYRDLYSSEADCLARLRPFIEQGADITNWSDLFVQSDKHSPVIHANIELSVKYGTTKLLEQIINKDTQFKTTEANFTAWNTAQKSIEQLIKQREDHHEQWVKAKNADDKEKQERKREKSNFAQKFIEKHGDDYLDICDYINTYNWLDNKMHFVHLNRLHGLTIELLGRMAGFVALFDRDFQFFDEQQIADEFKLHGFVNLHSIDKKLNEVPTKKIKEIYDIRNKIIQINGNKINESVRANLIQFISSKRNYYNNAFLHVSNDEIKEKQMYDIRNHIAHFNYLTKDAADFSLIDLINELRELLHYDRKLKNAVSKAFIDLFDKHGMILKLKLNADHKLKVESLEPKKIYHLGSSAKDKPEYQYCTNQVMMAYCNMCRSLLEMKK.

2 HEPN-like fold regions span residues 330–466 and 923–1154; these read TTSN…RFIN and FVHL…EMKK.

Belongs to the CRISPR-associated endoribonuclease Cas13a family. Requires a divalent metal cation as cofactor.

Target RNA acts as an activator for non-specific ssRNA degradation. Functionally, CRISPR (clustered regularly interspaced short palindromic repeat), is an adaptive immune system that provides protection against mobile genetic elements (viruses, transposable elements and conjugative plasmids). CRISPR clusters contain sequences complementary to antecedent mobile elements and target invading nucleic acids. Unlike many single-component effectors, this CRISPR-Cas system targets RNA. CRISPR clusters are transcribed from pre-CRISPR RNA (crRNA) and processed into crRNA by this protein. Cleaves linear target ssRNA in a pre-crRNA-dependent fashion, preferentially before U residues. Binding a viable target RNA target activates this protein for non-specific RNA degradation in vitro (called collateral RNA degradation), which is fairly sensitive as it requires picomolar levels of viable target RNA. This chain is CRISPR-associated endoribonuclease Cas13a, found in Paludibacter propionicigenes (strain DSM 17365 / JCM 13257 / WB4).